A 216-amino-acid chain; its full sequence is Acyl-homoserine-lactone synthase (216 aa).

The protein belongs to the autoinducer synthase family.

The enzyme catalyses a fatty acyl-[ACP] + S-adenosyl-L-methionine = an N-acyl-L-homoserine lactone + S-methyl-5'-thioadenosine + holo-[ACP] + H(+). Functionally, required for the synthesis of an acyl-HSL autoinducer that binds to YukR and which is involved in the regulation of motility and morphology. This is Acyl-homoserine-lactone synthase (yukI) from Yersinia ruckeri.